The primary structure comprises 460 residues: GTPase Der (460 aa).

EngA-type G domains are found at residues 4 to 174 (PQVA…PRRE) and 184 to 361 (PKIA…AERS). Residues 10-17 (GRPNVGKS), 57-61 (DTGGL), 126-129 (NKAE), 190-197 (GRPNVGKS), 237-241 (DTAGI), and 302-305 (NKWD) each bind GTP. One can recognise a KH-like domain in the interval 362–446 (RRIPTAELNQ…PIELVFRERE (85 aa)).

It belongs to the TRAFAC class TrmE-Era-EngA-EngB-Septin-like GTPase superfamily. EngA (Der) GTPase family. Associates with the 50S ribosomal subunit.

Its function is as follows. GTPase that plays an essential role in the late steps of ribosome biogenesis. This is GTPase Der from Thermomicrobium roseum (strain ATCC 27502 / DSM 5159 / P-2).